A 623-amino-acid chain; its full sequence is Membrane protein insertase YidC (623 aa).

5 helical membrane passes run 8-28, 379-399, 449-469, 507-527, and 543-563; these read LILA…LFPP, MGLA…PLAY, LPIL…FVTI, TTMA…SMWL, and IFAW…SGLV. A compositionally biased stretch (low complexity) spans 601–617; the sequence is KPAAQPAGKAANDGAAP. Positions 601-623 are disordered; it reads KPAAQPAGKAANDGAAPAKKRKP.

Belongs to the OXA1/ALB3/YidC family. Type 1 subfamily. As to quaternary structure, interacts with the Sec translocase complex via SecD. Specifically interacts with transmembrane segments of nascent integral membrane proteins during membrane integration.

It is found in the cell inner membrane. Its function is as follows. Required for the insertion and/or proper folding and/or complex formation of integral membrane proteins into the membrane. Involved in integration of membrane proteins that insert both dependently and independently of the Sec translocase complex, as well as at least some lipoproteins. Aids folding of multispanning membrane proteins. The polypeptide is Membrane protein insertase YidC (Cereibacter sphaeroides (strain ATCC 17029 / ATH 2.4.9) (Rhodobacter sphaeroides)).